Reading from the N-terminus, the 474-residue chain is E3 ubiquitin-protein ligase rnf168 (474 aa).

Basic and acidic residues predominate over residues 1–12 (MPPVSEVDRGPV). The tract at residues 1–20 (MPPVSEVDRGPVEESSGGLK) is disordered. An RING-type zinc finger spans residues 26–65 (CPVCLEIFLEPVTLPCMHTFCKPCFLETVDKSNMCCPLCR). The short motif at 119-137 (VCQPGELRKEYEDQISKLV) is the LR motif 1 element. The UMI motif motif lies at 152 to 160 (EEYIQRLLA). The MIU motif 1 motif lies at 174-195 (EEQQLENDEKLARLLSLELNSG). Positions 192–203 (LNSGPASESTCN) are enriched in polar residues. 2 disordered regions span residues 192-259 (LNSG…KPLS) and 367-474 (IQKE…NMGS). Residues 233-243 (PSSSDSSPDSS) are compositionally biased toward low complexity. An MIU motif 2 motif is present at residues 353–376 (RWQQEEEDRRLALRIQKELDRENS). The segment covering 367-383 (IQKELDRENSVDRRKGS) has biased composition (basic and acidic residues). Positions 379–390 (RRKGSADSYQLR) match the LR motif 2 motif. Polar residues-rich tracts occupy residues 385–402 (DSYQLRQKNTSVSTTTSP) and 409–418 (KGSNTTTAKN). Positions 422 to 432 (RRGEEKTEKRL) are enriched in basic and acidic residues. Positions 443 to 457 (VKTPVSSTAVSSTVK) are enriched in low complexity.

It belongs to the RNF168 family. As to quaternary structure, monomer.

The protein resides in the nucleus. The enzyme catalyses S-ubiquitinyl-[E2 ubiquitin-conjugating enzyme]-L-cysteine + [acceptor protein]-L-lysine = [E2 ubiquitin-conjugating enzyme]-L-cysteine + N(6)-ubiquitinyl-[acceptor protein]-L-lysine.. The protein operates within protein modification; protein ubiquitination. Functionally, E3 ubiquitin-protein ligase required for accumulation of repair proteins to sites of DNA damage. Acts with ube2n/ubc13 to amplify the rnf8-dependent histone ubiquitination. Recruited to sites of DNA damage at double-strand breaks (DSBs) by binding to ubiquitinated histone H2A and ubiquitinates histone H2A and H2AX, leading to amplify the rnf8-dependent H2A ubiquitination and promoting the formation of 'Lys-63'-linked ubiquitin conjugates. This leads to concentrate ubiquitinated histones H2A and H2AX at DNA lesions. Catalyzes monoubiquitination of 'Lys-13' and 'Lys-15' of nucleosomal histone H2A (H2AK13Ub and H2AK15Ub, respectively). This is E3 ubiquitin-protein ligase rnf168 from Danio rerio (Zebrafish).